The following is a 621-amino-acid chain: Chaperone protein HscA homolog (621 aa).

Belongs to the heat shock protein 70 family.

Functionally, chaperone involved in the maturation of iron-sulfur cluster-containing proteins. Has a low intrinsic ATPase activity which is markedly stimulated by HscB. This is Chaperone protein HscA homolog from Cupriavidus pinatubonensis (strain JMP 134 / LMG 1197) (Cupriavidus necator (strain JMP 134)).